The primary structure comprises 280 residues: Bifunctional protein FolD (280 aa).

NADP(+)-binding positions include 166–168 and Ser-191; that span reads GRS.

It belongs to the tetrahydrofolate dehydrogenase/cyclohydrolase family. As to quaternary structure, homodimer.

The enzyme catalyses (6R)-5,10-methylene-5,6,7,8-tetrahydrofolate + NADP(+) = (6R)-5,10-methenyltetrahydrofolate + NADPH. It carries out the reaction (6R)-5,10-methenyltetrahydrofolate + H2O = (6R)-10-formyltetrahydrofolate + H(+). Its pathway is one-carbon metabolism; tetrahydrofolate interconversion. Catalyzes the oxidation of 5,10-methylenetetrahydrofolate to 5,10-methenyltetrahydrofolate and then the hydrolysis of 5,10-methenyltetrahydrofolate to 10-formyltetrahydrofolate. This chain is Bifunctional protein FolD, found in Teredinibacter turnerae (strain ATCC 39867 / T7901).